Here is a 209-residue protein sequence, read N- to C-terminus: Thiamine-phosphate synthase (209 aa).

Residues 36–40 and Asn-68 contribute to the 4-amino-2-methyl-5-(diphosphooxymethyl)pyrimidine site; that span reads QYRDK. Positions 69 and 87 each coordinate Mg(2+). Thr-106 is a binding site for 4-amino-2-methyl-5-(diphosphooxymethyl)pyrimidine. 133-135 contributes to the 2-[(2R,5Z)-2-carboxy-4-methylthiazol-5(2H)-ylidene]ethyl phosphate binding site; it reads SST. Lys-136 is a 4-amino-2-methyl-5-(diphosphooxymethyl)pyrimidine binding site. Gly-163 is a binding site for 2-[(2R,5Z)-2-carboxy-4-methylthiazol-5(2H)-ylidene]ethyl phosphate.

It belongs to the thiamine-phosphate synthase family. Mg(2+) is required as a cofactor.

The enzyme catalyses 2-[(2R,5Z)-2-carboxy-4-methylthiazol-5(2H)-ylidene]ethyl phosphate + 4-amino-2-methyl-5-(diphosphooxymethyl)pyrimidine + 2 H(+) = thiamine phosphate + CO2 + diphosphate. It catalyses the reaction 2-(2-carboxy-4-methylthiazol-5-yl)ethyl phosphate + 4-amino-2-methyl-5-(diphosphooxymethyl)pyrimidine + 2 H(+) = thiamine phosphate + CO2 + diphosphate. It carries out the reaction 4-methyl-5-(2-phosphooxyethyl)-thiazole + 4-amino-2-methyl-5-(diphosphooxymethyl)pyrimidine + H(+) = thiamine phosphate + diphosphate. Its pathway is cofactor biosynthesis; thiamine diphosphate biosynthesis; thiamine phosphate from 4-amino-2-methyl-5-diphosphomethylpyrimidine and 4-methyl-5-(2-phosphoethyl)-thiazole: step 1/1. Condenses 4-methyl-5-(beta-hydroxyethyl)thiazole monophosphate (THZ-P) and 2-methyl-4-amino-5-hydroxymethyl pyrimidine pyrophosphate (HMP-PP) to form thiamine monophosphate (TMP). In Pseudomonas aeruginosa (strain LESB58), this protein is Thiamine-phosphate synthase.